The primary structure comprises 434 residues: Enolase (434 aa).

Substrate is bound by residues His-158 and Glu-167. Glu-210 acts as the Proton donor in catalysis. Mg(2+)-binding residues include Asp-245, Glu-294, and Asp-319. The substrate site is built by Glu-294 and Asp-319. Lys-344 functions as the Proton acceptor in the catalytic mechanism. Substrate-binding positions include 371-374 (SHRS) and Lys-395.

It belongs to the enolase family. Homodimer. It depends on Mg(2+) as a cofactor.

It is found in the cytoplasm. The enzyme catalyses (2R)-2-phosphoglycerate = phosphoenolpyruvate + H2O. Its pathway is carbohydrate degradation; glycolysis; pyruvate from D-glyceraldehyde 3-phosphate: step 4/5. This chain is Enolase (ENO), found in Schistosoma japonicum (Blood fluke).